The sequence spans 690 residues: Guanylate cyclase soluble subunit alpha-1 (690 aa).

Ser266 carries the post-translational modification Phosphoserine. The region spanning 480–607 is the Guanylate cyclase domain; sequence TMLFSDIVGF…NNVTLANKFE (128 aa).

It belongs to the adenylyl cyclase class-4/guanylyl cyclase family. As to quaternary structure, the active enzyme is formed by a heterodimer of an alpha and a beta subunit. Heterodimer with GUCY1B1. Mg(2+) is required as a cofactor. It depends on Mn(2+) as a cofactor.

The protein resides in the cytoplasm. The enzyme catalyses GTP = 3',5'-cyclic GMP + diphosphate. With respect to regulation, activated by nitric oxide in the presence of magnesium or manganese ions. The polypeptide is Guanylate cyclase soluble subunit alpha-1 (Gucy1a1) (Rattus norvegicus (Rat)).